The primary structure comprises 197 residues: dCTP deaminase, dUMP-forming (197 aa).

Residues 105–110 (RSSMGR), Asp-123, 131–133 (TLE), Gln-152, Tyr-166, Lys-174, and Gln-178 contribute to the dCTP site. Residue Glu-133 is the Proton donor/acceptor of the active site.

Belongs to the dCTP deaminase family. In terms of assembly, homotrimer.

It catalyses the reaction dCTP + 2 H2O = dUMP + NH4(+) + diphosphate. It functions in the pathway pyrimidine metabolism; dUMP biosynthesis; dUMP from dCTP: step 1/1. Its function is as follows. Bifunctional enzyme that catalyzes both the deamination of dCTP to dUTP and the hydrolysis of dUTP to dUMP without releasing the toxic dUTP intermediate. The chain is dCTP deaminase, dUMP-forming from Methanosphaera stadtmanae (strain ATCC 43021 / DSM 3091 / JCM 11832 / MCB-3).